Consider the following 452-residue polypeptide: Inner membrane metabolite transport protein YdjE (452 aa).

At 1–20 (MEQYDQIGARLDRLPLARFH) the chain is on the cytoplasmic side. A helical membrane pass occupies residues 21-43 (YRIFGIISFSLLLTGFLSYSGNV). Over 44–57 (VLAKLVSNGWSNNF) the chain is Periplasmic. Residues 58 to 80 (LNAAFTSALMFGYFIGSLTGGFI) traverse the membrane as a helical segment. Over 81–91 (GDYFGRRRAFR) the chain is Cytoplasmic. A helical membrane pass occupies residues 92–114 (INLLIVGIAATGAAFVPDMYWLI). Residues 115–117 (FFR) are Periplasmic-facing. A helical membrane pass occupies residues 118–140 (FLMGTGMGALIMVGYASFTEFIP). The Cytoplasmic segment spans residues 141–152 (ATVRGKWSARLS). Residues 153 to 175 (FVGNWSPMLSAAIGVVVIAFFSW) form a helical membrane-spanning segment. Residues 176–178 (RIM) are Periplasmic-facing. Residues 179-198 (FLLGGIGILLAWFLSGKYFI) form a helical membrane-spanning segment. Topologically, residues 199–265 (ESPRWLAGKG…KGEMLRRTLV (67 aa)) are cytoplasmic. The chain crosses the membrane as a helical span at residues 266–288 (AITVLIAMNISLYTITVWIPTIF). Topologically, residues 289-297 (VNSGIDVDK) are periplasmic. Residues 298–320 (SILMTAVIMIGAPVGIFIAALII) form a helical membrane-spanning segment. The Cytoplasmic portion of the chain corresponds to 321 to 326 (DHFPRR). A helical transmembrane segment spans residues 327 to 344 (LFGSTLLIIIAVLGYIYS). Residues 345–353 (IQTTEWAIL) are Periplasmic-facing. Residues 354 to 376 (IYGLVMIFFLYMYVCFASAVYIP) traverse the membrane as a helical segment. The Cytoplasmic segment spans residues 377–388 (ELWPTHLRLRGS). Residues 389-411 (GFVNAVGRIVAVFTPYGVAALLT) form a helical membrane-spanning segment. The Periplasmic segment spans residues 412 to 415 (HYGS). The helical transmembrane segment at 416-438 (ITVFMVLGVMLLLCALVLSIFGI) threads the bilayer. At 439–452 (ETRKVSLEEISEVN) the chain is on the cytoplasmic side.

The protein belongs to the major facilitator superfamily. Sugar transporter (TC 2.A.1.1) family.

The protein resides in the cell inner membrane. The protein is Inner membrane metabolite transport protein YdjE (ydjE) of Escherichia coli (strain K12).